Here is a 128-residue protein sequence, read N- to C-terminus: Fluoride-specific ion channel FluC (128 aa).

A run of 4 helical transmembrane segments spans residues 8 to 28 (IIFI…LGLL), 38 to 58 (LGTL…LAFF), 71 to 91 (FFVT…AEVI), and 103 to 123 (LMLA…GVFI). Residues Gly78 and Thr81 each contribute to the Na(+) site.

It belongs to the fluoride channel Fluc/FEX (TC 1.A.43) family.

The protein resides in the cell inner membrane. It carries out the reaction fluoride(in) = fluoride(out). Its activity is regulated as follows. Na(+) is not transported, but it plays an essential structural role and its presence is essential for fluoride channel function. In terms of biological role, fluoride-specific ion channel. Important for reducing fluoride concentration in the cell, thus reducing its toxicity. The sequence is that of Fluoride-specific ion channel FluC from Pasteurella multocida (strain Pm70).